The primary structure comprises 64 residues: Large ribosomal subunit protein uL30 (64 aa).

As to quaternary structure, part of the 50S ribosomal subunit. Post-translationally, the protein is methylated on either Ala-2 or Lys-3.

This Rhodopseudomonas palustris (strain ATCC BAA-98 / CGA009) protein is Large ribosomal subunit protein uL30.